The sequence spans 542 residues: Importin subunit alpha-1 (542 aa).

A disordered region spans residues 1–29 (MSASSRFIPEHRRQNYKGKGTFQADELRR). Residues 1–60 (MSASSRFIPEHRRQNYKGKGTFQADELRRRRETQQIEIRKQKREENLNKRRNLVDVQEPA) form the IBB domain. 8 ARM repeats span residues 114 to 155 (IQKV…SSNQ), 156 to 197 (THVV…SPMC), 198 to 240 (RDHV…KNPQ), 241 to 282 (PDWN…ANEK), 283 to 324 (IQAI…DDVQ), 325 to 366 (TQVI…NSSQ), 367 to 408 (IQYV…GARR), and 409 to 453 (PDQI…GELD).

It belongs to the importin alpha family. As to quaternary structure, interacts with pap1.

The protein localises to the nucleus. Its function is as follows. Binds specifically and directly to substrates containing either a simple or bipartite NLS motif. Promotes docking of import substrates to the nuclear envelope. Seems to act as a cytosolic receptor for both simple and bipartite NLS motifs. Has an essential role in mitotic chromosome condensation. Involved in nuclear protein import. Required for efficient nuclear import of both an SV40 nuclear localization signal-containing reporter protein and the pap1 component of the stress response MAP kinase pathway. Required for proper mitotic progression. The protein is Importin subunit alpha-1 (cut15) of Schizosaccharomyces pombe (strain 972 / ATCC 24843) (Fission yeast).